The sequence spans 118 residues: Ribulose bisphosphate carboxylase small subunit (118 aa).

Belongs to the RuBisCO small chain family. In terms of assembly, heterohexadecamer of 8 large and 8 small subunits.

Functionally, ruBisCO catalyzes two reactions: the carboxylation of D-ribulose 1,5-bisphosphate, the primary event in carbon dioxide fixation, as well as the oxidative fragmentation of the pentose substrate. Both reactions occur simultaneously and in competition at the same active site. Although the small subunit is not catalytic it is essential for maximal activity. The chain is Ribulose bisphosphate carboxylase small subunit from Rhodobacter capsulatus (Rhodopseudomonas capsulata).